The chain runs to 190 residues: Ubiquinol-cytochrome c reductase iron-sulfur subunit (190 aa).

The chain crosses the membrane as a helical span at residues 18–39 (FLYYATAGAGTVAAGAAAWTLV). A Rieske domain is found at 95–188 (GQLIDRSAQN…AEFLDDTTIK (94 aa)). [2Fe-2S] cluster contacts are provided by cysteine 132, histidine 134, cysteine 152, and histidine 155. Cysteine 137 and cysteine 154 are joined by a disulfide.

This sequence belongs to the Rieske iron-sulfur protein family. In terms of assembly, the main subunits of complex b-c1 are: cytochrome b, cytochrome c1 and the Rieske protein. [2Fe-2S] cluster is required as a cofactor.

The protein localises to the cell membrane. It catalyses the reaction a quinol + 2 Fe(III)-[cytochrome c](out) = a quinone + 2 Fe(II)-[cytochrome c](out) + 2 H(+)(out). In terms of biological role, component of the ubiquinol-cytochrome c reductase complex (complex III or cytochrome b-c1 complex), which is a respiratory chain that generates an electrochemical potential coupled to ATP synthesis. In Paracoccus denitrificans, this protein is Ubiquinol-cytochrome c reductase iron-sulfur subunit (petA).